The primary structure comprises 479 residues: Fibrinogen beta chain (479 aa).

A signal peptide spans 1–18; that stretch reads MRHLWLLLLSVSLVQTQA. The tract at residues 20-82 is disordered; sequence TTDSDKVDLS…VERKPPDAGG (63 aa). Residues 33–35 form a beta-chain polymerization, binding distal domain of another fibrin region; it reads GHR. Basic and acidic residues-rich tracts occupy residues 35–45 and 64–78; these read RPVDRRKEEPP and AKVDAGQKKVERKPP. 2 cysteine pairs are disulfide-bonded: C219–C304 and C229–C258. Residues 220-476 enclose the Fibrinogen C-terminal domain; the sequence is NIPVVSGKEC…RMSMKIRPVF (257 aa). A glycan (N-linked (GlcNAc...) asparagine) is linked at N382. C412 and C425 are joined by a disulfide.

In terms of assembly, heterohexamer; disulfide linked. Contains 2 sets of 3 non-identical chains (alpha, beta and gamma). The 2 heterotrimers are in head to head conformation with the N-termini in a small central domain. In terms of processing, conversion of fibrinogen to fibrin is triggered by thrombin, which cleaves fibrinopeptides A and B from alpha and beta chains, and thus exposes the N-terminal polymerization sites responsible for the formation of the soft clot.

It localises to the secreted. Cleaved by the protease thrombin to yield monomers which, together with fibrinogen alpha (FGA) and fibrinogen gamma (FGG), polymerize to form an insoluble fibrin matrix. Fibrin has a major function in hemostasis as one of the primary components of blood clots. In addition, functions during the early stages of wound repair to stabilize the lesion and guide cell migration during re-epithelialization. Was originally thought to be essential for platelet aggregation, based on in vitro studies using anticoagulated blood. However subsequent studies have shown that it is not absolutely required for thrombus formation in vivo. Enhances expression of SELP in activated platelets. Maternal fibrinogen is essential for successful pregnancy. Fibrin deposition is also associated with infection, where it protects against IFNG-mediated hemorrhage. May also facilitate the antibacterial immune response via both innate and T-cell mediated pathways. This Rattus norvegicus (Rat) protein is Fibrinogen beta chain (Fgb).